The sequence spans 513 residues: Histidine ammonia-lyase (513 aa).

Positions 146–148 (ASG) form a cross-link, 5-imidazolinone (Ala-Gly). At Ser147 the chain carries 2,3-didehydroalanine (Ser).

This sequence belongs to the PAL/histidase family. Post-translationally, contains an active site 4-methylidene-imidazol-5-one (MIO), which is formed autocatalytically by cyclization and dehydration of residues Ala-Ser-Gly.

Its subcellular location is the cytoplasm. It catalyses the reaction L-histidine = trans-urocanate + NH4(+). Its pathway is amino-acid degradation; L-histidine degradation into L-glutamate; N-formimidoyl-L-glutamate from L-histidine: step 1/3. The chain is Histidine ammonia-lyase from Shewanella oneidensis (strain ATCC 700550 / JCM 31522 / CIP 106686 / LMG 19005 / NCIMB 14063 / MR-1).